Reading from the N-terminus, the 814-residue chain is Echinoderm microtubule-associated protein-like 1 (814 aa).

A coiled-coil region spans residues Ser-31–Gln-72. Positions Asn-77–Ser-180 are disordered. Residues Pro-92–Thr-101 are compositionally biased toward polar residues. A compositionally biased stretch (low complexity) spans Leu-103 to Ser-115. The span at Lys-127–Arg-137 shows a compositional bias: polar residues. A compositionally biased stretch (basic and acidic residues) spans Gly-142 to Gly-152. Residues Asn-155–Lys-167 show a composition bias toward low complexity. The tract at residues Lys-175–Ile-814 is tandem atypical propeller in EMLs. WD repeat units follow at residues Glu-260 to Ser-309, Thr-314 to Trp-357, Arg-362 to Leu-399, Gln-408 to Lys-445, Arg-449 to Gly-488, Lys-492 to Thr-529, Phe-534 to Ala-571, Val-577 to Thr-612, Asp-616 to Val-654, Arg-663 to Pro-700, Ser-708 to Tyr-767, and Ala-774 to Val-813.

It belongs to the WD repeat EMAP family. Homotrimer; self-association is mediated by the N-terminal coiled coil. Does not interact with EML3. Binds unpolymerized tubulins via its WD repeat region. Binds repolymerizing microtubules. Interacts with TASOR. In terms of tissue distribution, detected in adult brain cortex, hippocampus and thalamus. Expressed in the stomach, lungs and in Sertoli cells of the testis.

Its subcellular location is the cytoplasm. It is found in the perinuclear region. The protein resides in the cytoskeleton. Modulates the assembly and organization of the microtubule cytoskeleton, and probably plays a role in regulating the orientation of the mitotic spindle and the orientation of the plane of cell division. Required for normal proliferation of neuronal progenitor cells in the developing brain and for normal brain development. Does not affect neuron migration per se. The chain is Echinoderm microtubule-associated protein-like 1 (Eml1) from Mus musculus (Mouse).